The following is a 72-amino-acid chain: KRAVQSEKARKHNASRRSMMRTFIKKVYAAIEAGDKAAAQKAFNEMQPIVDRQAAKGLIHKNKRARHKANLT.

This sequence belongs to the bacterial ribosomal protein bS20 family.

Its function is as follows. Binds directly to 16S ribosomal RNA. The polypeptide is Small ribosomal subunit protein bS20 (rpsT) (Klebsiella pneumoniae).